Here is a 351-residue protein sequence, read N- to C-terminus: Alcohol dehydrogenase 5 (351 aa).

Residues Cys-47, His-70, Cys-101, Cys-104, Cys-107, Cys-115, and Cys-183 each coordinate Zn(2+). NAD(+) is bound by residues 181-187 (GACGGLG), Asp-205, Lys-210, 272-274 (VGM), and Arg-344.

This sequence belongs to the zinc-containing alcohol dehydrogenase family. The cofactor is Zn(2+).

The enzyme catalyses a primary alcohol + NAD(+) = an aldehyde + NADH + H(+). It carries out the reaction a secondary alcohol + NAD(+) = a ketone + NADH + H(+). The chain is Alcohol dehydrogenase 5 (ADH5) from Saccharomyces pastorianus (Lager yeast).